The following is a 497-amino-acid chain: Nucleoside transporter 1 (497 aa).

Over methionine 1 to glutamate 26 the chain is Cytoplasmic. The chain crosses the membrane as a helical span at residues phenylalanine 27–valine 47. Topologically, residues phenylalanine 48–asparagine 77 are extracellular. A helical transmembrane segment spans residues valine 78–leucine 98. The Cytoplasmic portion of the chain corresponds to leucine 99–methionine 107. Residues leucine 108–valine 128 traverse the membrane as a helical segment. The Extracellular segment spans residues proline 129–glutamate 135. A helical membrane pass occupies residues alanine 136–phenylalanine 156. Over glutamate 157 to threonine 172 the chain is Cytoplasmic. A helical transmembrane segment spans residues serine 173–valine 193. The Extracellular segment spans residues lysine 194 to serine 208. The helical transmembrane segment at tyrosine 209–methionine 229 threads the bilayer. Over arginine 230–lysine 337 the chain is Cytoplasmic. The span at asparagine 286 to glutamate 299 shows a compositional bias: basic and acidic residues. Residues asparagine 286–glutamate 316 are disordered. Residues tryptophan 338–alanine 358 traverse the membrane as a helical segment. Residues threonine 359–methionine 361 lie on the Extracellular side of the membrane. Residues phenylalanine 362 to leucine 382 form a helical membrane-spanning segment. Residues glycine 383–arginine 400 lie on the Cytoplasmic side of the membrane. A helical membrane pass occupies residues tryptophan 401–serine 421. Residues tyrosine 422 to tyrosine 432 are Extracellular-facing. A helical transmembrane segment spans residues valine 433–glycine 453. Topologically, residues proline 454 to arginine 465 are cytoplasmic. A helical membrane pass occupies residues phenylalanine 466 to leucine 486. Residues serine 487–tyrosine 497 are Extracellular-facing.

Belongs to the SLC29A/ENT transporter (TC 2.A.57) family.

It localises to the cell membrane. The enzyme catalyses adenosine(in) = adenosine(out). The catalysed reaction is hypoxanthine(out) = hypoxanthine(in). It carries out the reaction inosine(in) = inosine(out). It catalyses the reaction uridine(out) = uridine(in). The enzyme catalyses cytidine(in) = cytidine(out). Functionally, nucleoside transporter with broad substrate specificity. Transports adenosine with high affinity. Can also transport hypoxanthine, inosine, uridine and cytidine. The sequence is that of Nucleoside transporter 1 from Crithidia fasciculata.